We begin with the raw amino-acid sequence, 206 residues long: GDT1-like protein sll0615 (206 aa).

Helical transmembrane passes span 36-56 (WVLV…VLMG), 58-78 (IFTF…FLIF), 114-134 (IVPR…VAEW), 151-171 (AWGV…IAVM), and 185-205 (VTLI…WTKI).

The protein belongs to the GDT1 family.

It is found in the cell membrane. This Synechocystis sp. (strain ATCC 27184 / PCC 6803 / Kazusa) protein is GDT1-like protein sll0615.